The sequence spans 142 residues: Large ribosomal subunit protein uL13 (142 aa).

Belongs to the universal ribosomal protein uL13 family. In terms of assembly, part of the 50S ribosomal subunit.

In terms of biological role, this protein is one of the early assembly proteins of the 50S ribosomal subunit, although it is not seen to bind rRNA by itself. It is important during the early stages of 50S assembly. The chain is Large ribosomal subunit protein uL13 from Azoarcus sp. (strain BH72).